Consider the following 284-residue polypeptide: ATP phosphoribosyltransferase (284 aa).

The protein belongs to the ATP phosphoribosyltransferase family. Long subfamily. As to quaternary structure, equilibrium between an active dimeric form, an inactive hexameric form and higher aggregates. Interconversion between the various forms is largely reversible and is influenced by the natural substrates and inhibitors of the enzyme. The cofactor is Mg(2+).

The protein resides in the cytoplasm. It catalyses the reaction 1-(5-phospho-beta-D-ribosyl)-ATP + diphosphate = 5-phospho-alpha-D-ribose 1-diphosphate + ATP. The protein operates within amino-acid biosynthesis; L-histidine biosynthesis; L-histidine from 5-phospho-alpha-D-ribose 1-diphosphate: step 1/9. With respect to regulation, feedback inhibited by histidine. In terms of biological role, catalyzes the condensation of ATP and 5-phosphoribose 1-diphosphate to form N'-(5'-phosphoribosyl)-ATP (PR-ATP). Has a crucial role in the pathway because the rate of histidine biosynthesis seems to be controlled primarily by regulation of HisG enzymatic activity. The protein is ATP phosphoribosyltransferase of Mycobacterium avium (strain 104).